A 392-amino-acid chain; its full sequence is Aminomethyltransferase, mitochondrial (392 aa).

The transit peptide at 1–16 (MLRAGCRAALARRHLS) directs the protein to the mitochondrion. 3 residues coordinate substrate: Glu-221, Arg-250, and Tyr-388.

It belongs to the GcvT family. As to quaternary structure, the glycine cleavage system is composed of four proteins: P, T, L and H.

It localises to the mitochondrion. The enzyme catalyses N(6)-[(R)-S(8)-aminomethyldihydrolipoyl]-L-lysyl-[protein] + (6S)-5,6,7,8-tetrahydrofolate = N(6)-[(R)-dihydrolipoyl]-L-lysyl-[protein] + (6R)-5,10-methylene-5,6,7,8-tetrahydrofolate + NH4(+). The glycine cleavage system catalyzes the degradation of glycine. The polypeptide is Aminomethyltransferase, mitochondrial (Gallus gallus (Chicken)).